The chain runs to 151 residues: UPF0178 protein VSAL_I0701 (151 aa).

This sequence belongs to the UPF0178 family.

The polypeptide is UPF0178 protein VSAL_I0701 (Aliivibrio salmonicida (strain LFI1238) (Vibrio salmonicida (strain LFI1238))).